A 182-amino-acid polypeptide reads, in one-letter code: Constitutive photomorphogenesis protein 10 (182 aa).

Positions 36–182 (ASGKRIQREM…AKEWTLRFAK (147 aa)) constitute a UBC core domain.

Belongs to the ubiquitin-conjugating enzyme family. In terms of assembly, component of the CDD complex, at least composed of COP10, DET1 and DDB1A. Interacts with E3 ubiquitin ligase COP1. Interacts with E2 ubiquitin conjugating UBC5. Interacts with CSN3, CSN4 and CSN8 subunits of the COP9 complex. Expressed in flower, leaf, stem and seedling. Expressed at lower level in root.

Its subcellular location is the nucleus. Functionally, component of light signal transduction machinery. Involved in repression of photomorphogenesis in darkness by participating in the CDD complex, a complex probably required to regulate the activity of ubiquitin conjugating enzymes (E2s). Repression of photomorphogenesis is probably mediated by ubiquitination and subsequent degradation of photomorphogenesis-promoting factors such as HY5, HYH and LAF1. Although strongly related to ubiquitin-conjugating enzyme, it has no catalytic activity by itself due to the absence of the conserved Cys active site at position 120. It can however enhance the activity of E2 conjugating enzymes. The chain is Constitutive photomorphogenesis protein 10 (COP10) from Arabidopsis thaliana (Mouse-ear cress).